The following is a 191-amino-acid chain: Adenylate kinase (191 aa).

An ATP-binding site is contributed by 9-17; sequence GVPGVGATT.

It belongs to the archaeal adenylate kinase family.

It is found in the cytoplasm. It catalyses the reaction AMP + ATP = 2 ADP. This is Adenylate kinase from Methanopyrus kandleri (strain AV19 / DSM 6324 / JCM 9639 / NBRC 100938).